Consider the following 325-residue polypeptide: Delta(1)-pyrroline-2-carboxylate reductase (325 aa).

The protein belongs to the ornithine cyclodeaminase/mu-crystallin family.

It carries out the reaction L-proline + NAD(+) = 1-pyrroline-2-carboxylate + NADH + H(+). The enzyme catalyses L-proline + NADP(+) = 1-pyrroline-2-carboxylate + NADPH + H(+). Its function is as follows. Catalyzes the reduction of Delta(1)-pyrroline-2-carboxylate (Pyr2C) to L-proline, using preferentially NADPH over NADH as the electron donor. Is likely involved in a degradation pathway that converts trans-3-hydroxy-L-proline (t3LHyp) to L-proline, which allows B.cereus to grow on t3LHyp as a sole carbon source. In Bacillus cereus (strain ATCC 14579 / DSM 31 / CCUG 7414 / JCM 2152 / NBRC 15305 / NCIMB 9373 / NCTC 2599 / NRRL B-3711), this protein is Delta(1)-pyrroline-2-carboxylate reductase.